The following is a 549-amino-acid chain: CTP synthase (549 aa).

The interval 1–266 (MSAKYIFVTG…DKLALRYLHL (266 aa)) is amidoligase domain. Ser-14 is a CTP binding site. Ser-14 is a binding site for UTP. ATP is bound by residues 15 to 20 (SLGKGL) and Asp-72. Residues Asp-72 and Glu-140 each coordinate Mg(2+). Residues 147 to 149 (DIE), 187 to 192 (KTKPTQ), and Lys-223 each bind CTP. Residues 187 to 192 (KTKPTQ) and Lys-223 each bind UTP. Residue 239–241 (KDV) coordinates ATP. Residues 291 to 533 (SIGIVGKYVE…VKAAYQNHKP (243 aa)) enclose the Glutamine amidotransferase type-1 domain. Gly-353 provides a ligand contact to L-glutamine. The active-site Nucleophile; for glutamine hydrolysis is Cys-380. Residues 381–384 (LGMQ), Glu-404, and Arg-461 contribute to the L-glutamine site. Residues His-506 and Glu-508 contribute to the active site.

This sequence belongs to the CTP synthase family. In terms of assembly, homotetramer.

It carries out the reaction UTP + L-glutamine + ATP + H2O = CTP + L-glutamate + ADP + phosphate + 2 H(+). It catalyses the reaction L-glutamine + H2O = L-glutamate + NH4(+). The catalysed reaction is UTP + NH4(+) + ATP = CTP + ADP + phosphate + 2 H(+). It participates in pyrimidine metabolism; CTP biosynthesis via de novo pathway; CTP from UDP: step 2/2. Allosterically activated by GTP, when glutamine is the substrate; GTP has no effect on the reaction when ammonia is the substrate. The allosteric effector GTP functions by stabilizing the protein conformation that binds the tetrahedral intermediate(s) formed during glutamine hydrolysis. Inhibited by the product CTP, via allosteric rather than competitive inhibition. Its function is as follows. Catalyzes the ATP-dependent amination of UTP to CTP with either L-glutamine or ammonia as the source of nitrogen. Regulates intracellular CTP levels through interactions with the four ribonucleotide triphosphates. The chain is CTP synthase from Acidobacterium capsulatum (strain ATCC 51196 / DSM 11244 / BCRC 80197 / JCM 7670 / NBRC 15755 / NCIMB 13165 / 161).